A 333-amino-acid polypeptide reads, in one-letter code: Protoheme IX farnesyltransferase (333 aa).

A run of 8 helical transmembrane segments spans residues 31 to 51 (VMSL…APIH), 52 to 72 (PVLA…SGAL), 115 to 135 (MFLG…TIVF), 152 to 172 (IVIG…AATG), 178 to 198 (AWLM…ALSL), 223 to 243 (KQIL…VLTG), 244 to 264 (LGGP…LLLA), and 303 to 323 (LFAF…GEAV).

The protein belongs to the UbiA prenyltransferase family. Protoheme IX farnesyltransferase subfamily.

The protein resides in the cell inner membrane. It carries out the reaction heme b + (2E,6E)-farnesyl diphosphate + H2O = Fe(II)-heme o + diphosphate. It functions in the pathway porphyrin-containing compound metabolism; heme O biosynthesis; heme O from protoheme: step 1/1. Its function is as follows. Converts heme B (protoheme IX) to heme O by substitution of the vinyl group on carbon 2 of heme B porphyrin ring with a hydroxyethyl farnesyl side group. The chain is Protoheme IX farnesyltransferase from Caulobacter vibrioides (strain ATCC 19089 / CIP 103742 / CB 15) (Caulobacter crescentus).